The following is a 274-amino-acid chain: 4-diphosphocytidyl-2-C-methyl-D-erythritol kinase (274 aa).

Lys10 is an active-site residue. Residue 101–111 participates in ATP binding; that stretch reads PTQAGLGGGSA. The active site involves Asp143.

The protein belongs to the GHMP kinase family. IspE subfamily.

It carries out the reaction 4-CDP-2-C-methyl-D-erythritol + ATP = 4-CDP-2-C-methyl-D-erythritol 2-phosphate + ADP + H(+). The protein operates within isoprenoid biosynthesis; isopentenyl diphosphate biosynthesis via DXP pathway; isopentenyl diphosphate from 1-deoxy-D-xylulose 5-phosphate: step 3/6. Catalyzes the phosphorylation of the position 2 hydroxy group of 4-diphosphocytidyl-2C-methyl-D-erythritol. The chain is 4-diphosphocytidyl-2-C-methyl-D-erythritol kinase from Helicobacter pylori (strain HPAG1).